Reading from the N-terminus, the 295-residue chain is Acetyl-coenzyme A carboxylase carboxyl transferase subunit beta (295 aa).

The tract at residues 1 to 20 is disordered; the sequence is MSWLSKLMPSGIRTENTPAK. Residues 28–295 enclose the CoA carboxyltransferase N-terminal domain; that stretch reads LWEKCSNCGS…QPHPQDADAA (268 aa). Positions 32, 35, 51, and 54 each coordinate Zn(2+). A C4-type zinc finger spans residues 32–54; it reads CSNCGSALYGPELEENLEVCPKC.

Belongs to the AccD/PCCB family. In terms of assembly, acetyl-CoA carboxylase is a heterohexamer composed of biotin carboxyl carrier protein (AccB), biotin carboxylase (AccC) and two subunits each of ACCase subunit alpha (AccA) and ACCase subunit beta (AccD). It depends on Zn(2+) as a cofactor.

Its subcellular location is the cytoplasm. The catalysed reaction is N(6)-carboxybiotinyl-L-lysyl-[protein] + acetyl-CoA = N(6)-biotinyl-L-lysyl-[protein] + malonyl-CoA. The protein operates within lipid metabolism; malonyl-CoA biosynthesis; malonyl-CoA from acetyl-CoA: step 1/1. Functionally, component of the acetyl coenzyme A carboxylase (ACC) complex. Biotin carboxylase (BC) catalyzes the carboxylation of biotin on its carrier protein (BCCP) and then the CO(2) group is transferred by the transcarboxylase to acetyl-CoA to form malonyl-CoA. This Xanthomonas campestris pv. campestris (strain 8004) protein is Acetyl-coenzyme A carboxylase carboxyl transferase subunit beta.